The primary structure comprises 212 residues: AVPQSIDWRDYGAVTSVKNQNPCGACWAFAAIATVESIYKIKKGILEPLSEQQVLDCAKGYGCKGGWEFRAFEFIISNKGVASGAIYPYKAAKGTCKTDGVPNSAYITGYARVPRNNESSMMYAVSKQPITVAVDANANFQYYKSGVFNGPCGTSLNHAVTAIGYGQDSIIYPKKWGAKWGEAGYIRMARDVSSSSGICGIAIDPLYPTLEE.

2 disulfide bridges follow: C23-C63 and C57-C96. Residue C26 is part of the active site. N117 carries N-linked (GlcNAc...) asparagine glycosylation. A disulfide bridge connects residues C152 and C199. The active site involves H158.

It belongs to the peptidase C1 family.

The catalysed reaction is Broad specificity for cleavage of proteins, but strong preference for Z-Arg-Arg-|-NHMec among small molecule substrates.. In terms of biological role, cysteine proteinase with a high level of diversity in substrate specificity. This chain is Stem bromelain, found in Ananas comosus (Pineapple).